A 310-amino-acid chain; its full sequence is Vomeronasal type-1 receptor 93 (310 aa).

Over Met1–Glu20 the chain is Extracellular. Residues Val21 to Gly41 form a helical membrane-spanning segment. At Glu42–Gln59 the chain is on the cytoplasmic side. The helical transmembrane segment at Leu60 to Trp80 threads the bilayer. At Asp81–Arg93 the chain is on the extracellular side. Residues Cys85 and Cys172 are joined by a disulfide bond. The chain crosses the membrane as a helical span at residues Leu94–Leu114. At Ser115 to Gly134 the chain is on the cytoplasmic side. The chain crosses the membrane as a helical span at residues Ala135–Ile155. Topologically, residues Ala156–Glu193 are extracellular. Asn159 carries N-linked (GlcNAc...) asparagine glycosylation. The chain crosses the membrane as a helical span at residues Ala194–His214. Residues Arg215–Glu238 are Cytoplasmic-facing. The chain crosses the membrane as a helical span at residues Thr239 to Tyr259. Over Ser260–Thr269 the chain is Extracellular. The chain crosses the membrane as a helical span at residues Phe270 to Ile290. Residues Phe291 to Ile310 are Cytoplasmic-facing.

Belongs to the G-protein coupled receptor 1 family. In terms of tissue distribution, expressed in 1-4% of neurons of the vomeronasal organ. Only one pheromone receptor gene may be expressed in a particular neuron. Not expressed in the main olfactory epithelium.

The protein localises to the cell membrane. Functionally, putative pheromone receptor implicated in the regulation of social as well as reproductive behavior. The polypeptide is Vomeronasal type-1 receptor 93 (Vom1r93) (Rattus norvegicus (Rat)).